We begin with the raw amino-acid sequence, 185 residues long: Alpha-S1-casein (185 aa).

Residues 1–15 (MRLLILTCLVAVALA) form the signal peptide. 10 positions are modified to phosphoserine: S31, S33, S41, S71, S85, S86, S88, S89, S90, and S91.

It belongs to the alpha-casein family. Heteromultimers of alpha-s1 casein and kappa-casein; disulfide-linked. In terms of processing, not glycosylated. In terms of tissue distribution, mammary gland specific. Secreted in milk.

It is found in the secreted. In terms of biological role, important role in the capacity of milk to transport calcium phosphate. Functionally, casoxin D acts as opioid antagonist and has vasorelaxing activity mediated by bradykinin B1 receptors. This is Alpha-S1-casein (CSN1S1) from Homo sapiens (Human).